The primary structure comprises 353 residues: MTLNHFYCSIEEEIRDLTIIGGGPTGIFAAFQCGMNNISCRIIESMPQLGGQLAALYPEKHIYDVAGFPEVPAAGLVDTLWKQAERHHPEIILNETVMRYHKRDNGMFEVSVSSGHTYVSRAVLIAAGLGAFTPRKLPQLENIEALEGKSIFYAVKNVADFTGKHVVIVGGGDSALDWSVGLLKSAASVTLVHRMHEFQGHGKTAHEVMEARDAGRLNVMLDTEVMGIDVENEELKAVHVQSKNGKTRTFPADRLLLLIGFKSNIGPLAEWGLEIVDNALVVDSHMKTSVDGLYAAGDIAYYTGKLKIIQTGLSDATMAVRHSLHYIKPGEKIKHTFSSVKMAKEKKKGMQNG.

Positions 25, 44, 52, 57, 97, 132, 298, and 339 each coordinate FAD.

It belongs to the ferredoxin--NADP reductase type 2 family. In terms of assembly, homodimer. FAD serves as cofactor.

The catalysed reaction is 2 reduced [2Fe-2S]-[ferredoxin] + NADP(+) + H(+) = 2 oxidized [2Fe-2S]-[ferredoxin] + NADPH. This Chlorobium chlorochromatii (strain CaD3) protein is Ferredoxin--NADP reductase.